The chain runs to 161 residues: Nucleotide-binding protein RC1_3464 (161 aa).

This sequence belongs to the YajQ family.

Functionally, nucleotide-binding protein. This chain is Nucleotide-binding protein RC1_3464, found in Rhodospirillum centenum (strain ATCC 51521 / SW).